The following is a 569-amino-acid chain: 2-succinyl-5-enolpyruvyl-6-hydroxy-3-cyclohexene-1-carboxylate synthase (569 aa).

The protein belongs to the TPP enzyme family. MenD subfamily. In terms of assembly, homodimer. Requires Mg(2+) as cofactor. It depends on Mn(2+) as a cofactor. Thiamine diphosphate serves as cofactor.

The enzyme catalyses isochorismate + 2-oxoglutarate + H(+) = 5-enolpyruvoyl-6-hydroxy-2-succinyl-cyclohex-3-ene-1-carboxylate + CO2. It participates in quinol/quinone metabolism; 1,4-dihydroxy-2-naphthoate biosynthesis; 1,4-dihydroxy-2-naphthoate from chorismate: step 2/7. Its pathway is cofactor biosynthesis; phylloquinone biosynthesis. Its function is as follows. Catalyzes the thiamine diphosphate-dependent decarboxylation of 2-oxoglutarate and the subsequent addition of the resulting succinic semialdehyde-thiamine pyrophosphate anion to isochorismate to yield 2-succinyl-5-enolpyruvyl-6-hydroxy-3-cyclohexene-1-carboxylate (SEPHCHC). In Microcystis aeruginosa (strain NIES-843 / IAM M-2473), this protein is 2-succinyl-5-enolpyruvyl-6-hydroxy-3-cyclohexene-1-carboxylate synthase.